Consider the following 185-residue polypeptide: Lysozyme g (185 aa).

The active site involves E73.

The protein belongs to the glycosyl hydrolase 23 family.

It carries out the reaction Hydrolysis of (1-&gt;4)-beta-linkages between N-acetylmuramic acid and N-acetyl-D-glucosamine residues in a peptidoglycan and between N-acetyl-D-glucosamine residues in chitodextrins.. This chain is Lysozyme g, found in Cyprinus carpio (Common carp).